A 254-amino-acid chain; its full sequence is Large ribosomal subunit protein uL4 (254 aa).

The disordered stretch occupies residues 45–70 (PWGNDPEAGKRTSAKGWGSGRGTARV).

This sequence belongs to the universal ribosomal protein uL4 family. Part of the 50S ribosomal subunit.

Functionally, one of the primary rRNA binding proteins, this protein initially binds near the 5'-end of the 23S rRNA. It is important during the early stages of 50S assembly. It makes multiple contacts with different domains of the 23S rRNA in the assembled 50S subunit and ribosome. Its function is as follows. Forms part of the polypeptide exit tunnel. This chain is Large ribosomal subunit protein uL4, found in Methanobrevibacter smithii (strain ATCC 35061 / DSM 861 / OCM 144 / PS).